The following is a 282-amino-acid chain: Large ribosomal subunit protein uL2 (282 aa).

The tract at residues 215–282 (RHKGIRPTVR…IIRSRKETKK (68 aa)) is disordered. Over residues 263 to 282 (RNPKKPSTKLIIRSRKETKK) the composition is skewed to basic residues.

It belongs to the universal ribosomal protein uL2 family. As to quaternary structure, part of the 50S ribosomal subunit. Forms a bridge to the 30S subunit in the 70S ribosome.

Functionally, one of the primary rRNA binding proteins. Required for association of the 30S and 50S subunits to form the 70S ribosome, for tRNA binding and peptide bond formation. It has been suggested to have peptidyltransferase activity; this is somewhat controversial. Makes several contacts with the 16S rRNA in the 70S ribosome. The chain is Large ribosomal subunit protein uL2 from Mesomycoplasma hyopneumoniae (strain J / ATCC 25934 / NCTC 10110) (Mycoplasma hyopneumoniae).